The sequence spans 355 residues: Protein RecA (355 aa).

65-72 serves as a coordination point for ATP; it reads GPESSGKT.

It belongs to the RecA family.

It localises to the cytoplasm. In terms of biological role, can catalyze the hydrolysis of ATP in the presence of single-stranded DNA, the ATP-dependent uptake of single-stranded DNA by duplex DNA, and the ATP-dependent hybridization of homologous single-stranded DNAs. It interacts with LexA causing its activation and leading to its autocatalytic cleavage. In Pseudomonas entomophila (strain L48), this protein is Protein RecA.